The primary structure comprises 338 residues: UDP-3-O-acylglucosamine N-acyltransferase (338 aa).

The active-site Proton acceptor is the His239.

Belongs to the transferase hexapeptide repeat family. LpxD subfamily. As to quaternary structure, homotrimer.

The catalysed reaction is a UDP-3-O-[(3R)-3-hydroxyacyl]-alpha-D-glucosamine + a (3R)-hydroxyacyl-[ACP] = a UDP-2-N,3-O-bis[(3R)-3-hydroxyacyl]-alpha-D-glucosamine + holo-[ACP] + H(+). It participates in bacterial outer membrane biogenesis; LPS lipid A biosynthesis. Functionally, catalyzes the N-acylation of UDP-3-O-acylglucosamine using 3-hydroxyacyl-ACP as the acyl donor. Is involved in the biosynthesis of lipid A, a phosphorylated glycolipid that anchors the lipopolysaccharide to the outer membrane of the cell. This chain is UDP-3-O-acylglucosamine N-acyltransferase, found in Xylella fastidiosa (strain M12).